A 110-amino-acid polypeptide reads, in one-letter code: Parvalbumin alpha (110 aa).

N-acetylserine is present on serine 2. A phosphoserine mark is found at serine 2, serine 8, and serine 24. 2 EF-hand domains span residues 39–74 (KNPD…FSSD) and 78–110 (LSAK…VAES). Residues aspartate 52, aspartate 54, serine 56, phenylalanine 58, glutamate 60, glutamate 63, aspartate 91, aspartate 93, aspartate 95, lysine 97, and glutamate 102 each contribute to the Ca(2+) site.

As to expression, expressed in the modiolar nerve root (at protein level).

Functionally, in muscle, parvalbumin is thought to be involved in relaxation after contraction. It binds two calcium ions. In Mus musculus (Mouse), this protein is Parvalbumin alpha (Pvalb).